The chain runs to 352 residues: [Citrate [pro-3S]-lyase] ligase (352 aa).

The N-acetyltransferase domain maps to 1–128 (MFGNDIFTRV…VMVLMENSAT (128 aa)).

The enzyme catalyses holo-[citrate lyase ACP] + acetate + ATP = acetyl-[citrate lyase ACP] + AMP + diphosphate. In terms of biological role, acetylation of prosthetic group (2-(5''-phosphoribosyl)-3'-dephosphocoenzyme-A) of the gamma subunit of citrate lyase. The protein is [Citrate [pro-3S]-lyase] ligase (citC) of Escherichia coli (strain K12).